Here is a 409-residue protein sequence, read N- to C-terminus: 4-hydroxy-3-methylbut-2-en-1-yl diphosphate synthase (flavodoxin) (409 aa).

Positions 298, 301, 344, and 351 each coordinate [4Fe-4S] cluster.

This sequence belongs to the IspG family. It depends on [4Fe-4S] cluster as a cofactor.

It carries out the reaction (2E)-4-hydroxy-3-methylbut-2-enyl diphosphate + oxidized [flavodoxin] + H2O + 2 H(+) = 2-C-methyl-D-erythritol 2,4-cyclic diphosphate + reduced [flavodoxin]. Its pathway is isoprenoid biosynthesis; isopentenyl diphosphate biosynthesis via DXP pathway; isopentenyl diphosphate from 1-deoxy-D-xylulose 5-phosphate: step 5/6. Functionally, converts 2C-methyl-D-erythritol 2,4-cyclodiphosphate (ME-2,4cPP) into 1-hydroxy-2-methyl-2-(E)-butenyl 4-diphosphate. This Dechloromonas aromatica (strain RCB) protein is 4-hydroxy-3-methylbut-2-en-1-yl diphosphate synthase (flavodoxin).